Reading from the N-terminus, the 160-residue chain is SsrA-binding protein (160 aa).

It belongs to the SmpB family.

The protein localises to the cytoplasm. Required for rescue of stalled ribosomes mediated by trans-translation. Binds to transfer-messenger RNA (tmRNA), required for stable association of tmRNA with ribosomes. tmRNA and SmpB together mimic tRNA shape, replacing the anticodon stem-loop with SmpB. tmRNA is encoded by the ssrA gene; the 2 termini fold to resemble tRNA(Ala) and it encodes a 'tag peptide', a short internal open reading frame. During trans-translation Ala-aminoacylated tmRNA acts like a tRNA, entering the A-site of stalled ribosomes, displacing the stalled mRNA. The ribosome then switches to translate the ORF on the tmRNA; the nascent peptide is terminated with the 'tag peptide' encoded by the tmRNA and targeted for degradation. The ribosome is freed to recommence translation, which seems to be the essential function of trans-translation. The chain is SsrA-binding protein from Mycobacterium leprae (strain Br4923).